Consider the following 369-residue polypeptide: Small RNA 2'-O-methyltransferase (369 aa).

Residues Ser-39, Asp-57, and Ser-93 each contribute to the S-adenosyl-L-methionine site. Mg(2+) is bound by residues Glu-111, Glu-114, His-115, and His-161.

It belongs to the methyltransferase superfamily. HEN1 family. Mg(2+) serves as cofactor.

It is found in the cytoplasm. The enzyme catalyses small RNA 3'-end nucleotide + S-adenosyl-L-methionine = small RNA 3'-end 2'-O-methylnucleotide + S-adenosyl-L-homocysteine + H(+). Its function is as follows. Methyltransferase that adds a 2'-O-methyl group at the 3'-end of piRNAs, a class of 24 to 30 nucleotide RNAs that are generated by a Dicer-independent mechanism and are primarily derived from transposons and other repeated sequence elements. This probably protects the 3'-end of piRNAs from uridylation activity and subsequent degradation. Stabilization of piRNAs is essential for gametogenesis. The polypeptide is Small RNA 2'-O-methyltransferase (henmt1) (Xenopus tropicalis (Western clawed frog)).